The sequence spans 290 residues: N-acetylmannosamine kinase (290 aa).

ATP is bound by residues 6 to 13 (ALDIGGTK) and 132 to 139 (GVGGGIIL). The Zn(2+) site is built by His156, Cys166, Cys168, and Cys173.

It belongs to the ROK (NagC/XylR) family. NanK subfamily. Homodimer.

It carries out the reaction an N-acyl-D-mannosamine + ATP = an N-acyl-D-mannosamine 6-phosphate + ADP + H(+). It participates in amino-sugar metabolism; N-acetylneuraminate degradation; D-fructose 6-phosphate from N-acetylneuraminate: step 2/5. Functionally, catalyzes the phosphorylation of N-acetylmannosamine (ManNAc) to ManNAc-6-P. In Yersinia pseudotuberculosis serotype O:1b (strain IP 31758), this protein is N-acetylmannosamine kinase.